The primary structure comprises 83 residues: MASTRLFVLLVIGTVLLCQVSGFLDELLAEHELPQDMTKRGCRNAYSSAICGKVITADDCMRKSSSRMGSFARKKCQRLCGIC.

Positions 1 to 19 (MASTRLFVLLVIGTVLLCQ) are cleaved as a signal peptide. Residues 20 to 38 (VSGFLDELLAEHELPQDMT) constitute a propeptide that is removed on maturation.

The protein belongs to the sea anemone 8 toxin family.

It is found in the secreted. It localises to the nematocyst. The chain is U-actitoxin-Avd8d from Anemonia viridis (Snakelocks anemone).